The chain runs to 637 residues: Threonine--tRNA ligase (637 aa).

The 61-residue stretch at 1-61 (MLNITLPDGS…TEDSSVQIIT (61 aa)) folds into the TGS domain. The tract at residues 242–533 (DHRKLGKQLD…LIENHAGSFP (292 aa)) is catalytic. 3 residues coordinate Zn(2+): Cys333, His384, and His510.

It belongs to the class-II aminoacyl-tRNA synthetase family. As to quaternary structure, homodimer. Requires Zn(2+) as cofactor.

Its subcellular location is the cytoplasm. It carries out the reaction tRNA(Thr) + L-threonine + ATP = L-threonyl-tRNA(Thr) + AMP + diphosphate + H(+). Catalyzes the attachment of threonine to tRNA(Thr) in a two-step reaction: L-threonine is first activated by ATP to form Thr-AMP and then transferred to the acceptor end of tRNA(Thr). Also edits incorrectly charged L-seryl-tRNA(Thr). This is Threonine--tRNA ligase from Neisseria meningitidis serogroup C (strain 053442).